A 399-amino-acid polypeptide reads, in one-letter code: Phosphatidate cytidylyltransferase 5, chloroplastic (399 aa).

A chloroplast-targeting transit peptide spans methionine 1–arginine 26. 6 consecutive transmembrane segments (helical) span residues valine 123 to leucine 143, phenylalanine 187 to leucine 207, leucine 217 to leucine 237, valine 266 to phenylalanine 286, alanine 309 to tryptophan 329, and leucine 333 to threonine 353.

Belongs to the CDS family. Mg(2+) serves as cofactor.

It localises to the plastid. It is found in the chloroplast membrane. It carries out the reaction a 1,2-diacyl-sn-glycero-3-phosphate + CTP + H(+) = a CDP-1,2-diacyl-sn-glycerol + diphosphate. It participates in phospholipid metabolism; CDP-diacylglycerol biosynthesis; CDP-diacylglycerol from sn-glycerol 3-phosphate: step 3/3. Highest activities is obtained at about 30 mM CTP and 2 mM phosphatidic acid (PA). In terms of biological role, may be involved in the synthesis of minor phospholipids and in modulation of IP3-mediated signal transduction. Promotes the biosynthesis of plastidial phosphatidylglycerol (PG) which is required for structure and function of thylakoid membranes and, hence, for photoautotrophic growth. The sequence is that of Phosphatidate cytidylyltransferase 5, chloroplastic from Arabidopsis thaliana (Mouse-ear cress).